The chain runs to 924 residues: WSC domain-containing protein ARB_07867 (924 aa).

The signal sequence occupies residues Met-1–Ser-24. The WSC 1 domain occupies Thr-62 to Thr-160. Asn-90 carries an N-linked (GlcNAc...) asparagine glycan. Residues Asp-166 to Gln-190 form a disordered region. Positions Thr-169–Thr-189 are enriched in low complexity. The WSC 2 domain maps to Gly-195–Gly-289. Asn-290, Asn-333, Asn-387, Asn-455, Asn-552, Asn-758, and Asn-833 each carry an N-linked (GlcNAc...) asparagine glycan. The 98-residue stretch at Gly-307–Met-404 folds into the WSC 3 domain.

The protein resides in the secreted. The protein is WSC domain-containing protein ARB_07867 of Arthroderma benhamiae (strain ATCC MYA-4681 / CBS 112371) (Trichophyton mentagrophytes).